The following is a 337-amino-acid chain: HTH-type transcriptional regulator MalR (337 aa).

An HTH lacI-type domain is found at 1 to 56 (MVTIKDIAQAANVSTSTVSRVISGNPRISMQTREKVKATMKSFNYQPNRAARTLAT). A DNA-binding region (H-T-H motif) is located at residues 4–23 (IKDIAQAANVSTSTVSRVIS).

In terms of biological role, transcriptional repressor of the malA gene for maltase. The polypeptide is HTH-type transcriptional regulator MalR (malR) (Staphylococcus xylosus).